The primary structure comprises 269 residues: GATA transcription factor 3 (269 aa).

A Nuclear localization signal motif is present at residues 136–143 (KPRTKRSR). The segment at 176–230 (LVFQRRCSHCGTNNTPQWRTGPVGPKTLCNACGVRFKSGRLCPEYRPADSPTFSN) adopts a GATA-type zinc-finger fold. Residues 245 to 269 (KSKELGEETGEASTKSDPVKFGSKW) form a disordered region.

It belongs to the type IV zinc-finger family. Class A subfamily. Mostly expressed in roots. Also expressed in stems, flowers and leaves.

It is found in the nucleus. In terms of biological role, transcriptional activator that specifically binds 5'-GATA-3' or 5'-GAT-3' motifs within gene promoters. May be involved in the regulation of some light-responsive genes. This is GATA transcription factor 3 (GATA3) from Arabidopsis thaliana (Mouse-ear cress).